We begin with the raw amino-acid sequence, 487 residues long: Malonate-semialdehyde dehydrogenase (487 aa).

NAD(+) is bound by residues A150, F152, K176, E179, R180, S229, and T251. C284 functions as the Nucleophile in the catalytic mechanism. An NAD(+)-binding site is contributed by E382.

Belongs to the aldehyde dehydrogenase family. IolA subfamily. Homotetramer.

It carries out the reaction 3-oxopropanoate + NAD(+) + CoA + H2O = hydrogencarbonate + acetyl-CoA + NADH + H(+). The catalysed reaction is 2-methyl-3-oxopropanoate + NAD(+) + CoA + H2O = propanoyl-CoA + hydrogencarbonate + NADH + H(+). It participates in polyol metabolism; myo-inositol degradation into acetyl-CoA; acetyl-CoA from myo-inositol: step 7/7. Functionally, catalyzes the oxidation of malonate semialdehyde (MSA) and methylmalonate semialdehyde (MMSA) into acetyl-CoA and propanoyl-CoA, respectively. Is involved in a myo-inositol catabolic pathway. Bicarbonate, and not CO2, is the end-product of the enzymatic reaction. The protein is Malonate-semialdehyde dehydrogenase of Bacillus subtilis (strain 168).